We begin with the raw amino-acid sequence, 37 residues long: Potassium channel toxin alpha-KTx 4.3 (37 aa).

3 cysteine pairs are disulfide-bonded: Cys7/Cys28, Cys13/Cys33, and Cys17/Cys35. Residues 26–33 are interaction with Ca(2+)-activated K(+) channels; that stretch reads GKCMNGKC.

As to expression, expressed by the venom gland.

The protein resides in the secreted. In terms of biological role, blocks reversibly Shaker B potassium-channels. In Tityus discrepans (Venezuelan scorpion), this protein is Potassium channel toxin alpha-KTx 4.3.